The chain runs to 192 residues: Peroxiredoxin tpx1 (192 aa).

The 159-residue stretch at 3–161 folds into the Thioredoxin domain; the sequence is LQIGKPAPDF…ALRLLDAFQF (159 aa). Residue Cys48 is the Cysteine sulfenic acid (-SOH) intermediate of the active site. A phosphoserine mark is found at Ser105 and Ser148.

This sequence belongs to the peroxiredoxin family. AhpC/Prx1 subfamily. Homodimer; disulfide-linked, upon oxidation. Interacts with srx1 in response to oxidative stress. Interacts with pap1 via transient disulfide linkages. The enzyme can be inactivated by further oxidation of the cysteine sulfenic acid (C(P)-SOH) to sulphinic acid (C(P)-SO2H) instead of its condensation to a disulfide bond. It can be reactivated by forming a transient disulfide bond with sulfiredoxin srx1, which reduces the cysteine sulfinic acid in an ATP- and Mg-dependent manner.

It is found in the cytoplasm. Its subcellular location is the nucleus. It catalyses the reaction a hydroperoxide + [thioredoxin]-dithiol = an alcohol + [thioredoxin]-disulfide + H2O. Thiol-specific peroxidase that catalyzes the reduction of hydrogen peroxide and organic hydroperoxides to water and alcohols, respectively. Plays a role in cell protection against oxidative stress by detoxifying peroxides and as sensor of hydrogen peroxide-mediated signaling events. Relays hydrogen peroxide as a signal to the transcription factor pap1 by inducing the formation of intramolecular disulfide bonds in pap1, which causes its nuclear accumulation and activation. Reduced by srx1 and this regulation acts as a molecular switch controlling the transcriptional response to hydrogen peroxide. The sequence is that of Peroxiredoxin tpx1 (tpx1) from Schizosaccharomyces pombe (strain 972 / ATCC 24843) (Fission yeast).